The primary structure comprises 230 residues: Lipopolysaccharide core heptose(II) kinase WaaY (230 aa).

It belongs to the protein kinase superfamily. RfaY/WaaY family.

The enzyme catalyses alpha-D-Glc-(1-&gt;3)-[L-alpha-D-Hep-(1-&gt;7)]-L-alpha-D-Hep-(1-&gt;3)-4-O-PO3(2-)-L-alpha-D-Hep-(1-&gt;5)-[alpha-Kdo-(2-&gt;4)]-alpha-Kdo-(2-&gt;6)-lipid A + ATP = alpha-D-Glc-(1-&gt;3)-[L-alpha-D-Hep-(1-&gt;7)]-4-O-PO3(2-)-L-alpha-D-Hep-(1-&gt;3)-4-O-PO3(2-)-L-alpha-D-Hep-(1-&gt;5)-[alpha-Kdo-(2-&gt;4)]-alpha-Kdo-(2-&gt;6)-lipid A + ADP + H(+). It participates in bacterial outer membrane biogenesis; LPS core biosynthesis. Kinase involved in the biosynthesis of the core oligosaccharide region of lipopolysaccharide (LPS). Catalyzes the phosphorylation of the second heptose unit (HepII) of the inner core. In Escherichia coli, this protein is Lipopolysaccharide core heptose(II) kinase WaaY.